The primary structure comprises 121 residues: Large ribosomal subunit protein uL24 (121 aa).

The protein belongs to the universal ribosomal protein uL24 family. Part of the 50S ribosomal subunit.

In terms of biological role, one of two assembly initiator proteins, it binds directly to the 5'-end of the 23S rRNA, where it nucleates assembly of the 50S subunit. Located at the polypeptide exit tunnel on the outside of the subunit. The protein is Large ribosomal subunit protein uL24 of Pyrococcus horikoshii (strain ATCC 700860 / DSM 12428 / JCM 9974 / NBRC 100139 / OT-3).